The chain runs to 349 residues: 4-hydroxy-2-oxovalerate aldolase 2 (349 aa).

The 253-residue stretch at 12–264 folds into the Pyruvate carboxyltransferase domain; it reads VRMTDTSLRD…KTGIDFFDIA (253 aa). Residue 20-21 participates in substrate binding; the sequence is RD. Residue Asp-21 participates in Mn(2+) binding. His-24 functions as the Proton acceptor in the catalytic mechanism. Substrate is bound by residues Ser-174 and His-203. Positions 203 and 205 each coordinate Mn(2+). Tyr-294 is a binding site for substrate.

It belongs to the 4-hydroxy-2-oxovalerate aldolase family.

It carries out the reaction (S)-4-hydroxy-2-oxopentanoate = acetaldehyde + pyruvate. In Mycolicibacterium smegmatis (strain ATCC 700084 / mc(2)155) (Mycobacterium smegmatis), this protein is 4-hydroxy-2-oxovalerate aldolase 2 (bphI-2).